A 116-amino-acid polypeptide reads, in one-letter code: MNAKKQSRIRRARRARAKMKELGVSRLCVNRTPRHIYAQVISAEGDRVVASASTLDKDLRSGSTGNRDAASAVGKLIAERAKAAGVSTVAFDRSGFKYHGRVKALADAAREGGLEF.

The protein belongs to the universal ribosomal protein uL18 family. In terms of assembly, part of the 50S ribosomal subunit; part of the 5S rRNA/L5/L18/L25 subcomplex. Contacts the 5S and 23S rRNAs.

In terms of biological role, this is one of the proteins that bind and probably mediate the attachment of the 5S RNA into the large ribosomal subunit, where it forms part of the central protuberance. This is Large ribosomal subunit protein uL18 from Saccharophagus degradans (strain 2-40 / ATCC 43961 / DSM 17024).